A 465-amino-acid polypeptide reads, in one-letter code: Asparagine--tRNA ligase (465 aa).

The protein belongs to the class-II aminoacyl-tRNA synthetase family. In terms of assembly, homodimer.

It localises to the cytoplasm. The enzyme catalyses tRNA(Asn) + L-asparagine + ATP = L-asparaginyl-tRNA(Asn) + AMP + diphosphate + H(+). The polypeptide is Asparagine--tRNA ligase (Hahella chejuensis (strain KCTC 2396)).